The sequence spans 427 residues: Zinc finger protein 134 (427 aa).

Lys20 is covalently cross-linked (Glycyl lysine isopeptide (Lys-Gly) (interchain with G-Cter in SUMO2)). The C2H2-type 1 zinc-finger motif lies at 50 to 72 (LPCDICGPILKDILHLDEHQGTH). A C2H2-type 2; degenerate zinc finger spans residues 78-100 (HTCGACGRQFWFSANLHQYQKCY). Glycyl lysine isopeptide (Lys-Gly) (interchain with G-Cter in SUMO2) cross-links involve residues Lys135 and Lys139. C2H2-type zinc fingers lie at residues 176 to 198 (YKCSECGKAFSRKDTLVQHQRIH), 204 to 226 (YECSECGKAFSRKATLVQHQRIH), 232 to 254 (YECSECGKTFSRKDNLTQHKRIH), 260 to 282 (YKCNECGKYFSHHSNLIVHQRVH), 288 to 310 (YKCSDCGKVFRHKSTLVQHESIH), 316 to 338 (YDCSDCGKSFGHKYTLIKHQRIH), 344 to 366 (FECIECGKFFSRSSDYIAHQRVH), 372 to 394 (FVCSKCGKDFIRTSHLVRHQRVH), and 400 to 422 (YECSECGKAYSLSSHLNRHQKVH).

The protein belongs to the krueppel C2H2-type zinc-finger protein family.

It localises to the nucleus. Functionally, may be involved in transcriptional regulation. This Homo sapiens (Human) protein is Zinc finger protein 134 (ZNF134).